We begin with the raw amino-acid sequence, 251 residues long: Probable metal-binding protein YrpE (251 aa).

The first 30 residues, 1–30 (MNILFSKRLGILTIGSLLVLAGCQTSGSSA), serve as a signal peptide directing secretion. Over residues 25–41 (TSGSSAGESNQTTSSSA) the composition is skewed to polar residues. Residues 25 to 72 (TSGSSAGESNQTTSSSAVEEDSSKTQEQTSDSHTHEHSHDHSHAHDEE) form a disordered region. A compositionally biased stretch (basic and acidic residues) spans 54–72 (SDSHTHEHSHDHSHAHDEE). Zn(2+) contacts are provided by His-203, His-212, His-214, Glu-247, and His-251.

It belongs to the calycin superfamily. ZinT family.

This chain is Probable metal-binding protein YrpE (yrpE), found in Bacillus subtilis (strain 168).